We begin with the raw amino-acid sequence, 156 residues long: Enhancer of split M1 protein (156 aa).

Positions 1 to 19 are cleaved as a signal peptide; that stretch reads MMSQTLTLCCLGLVACVYG. Kazal-like domains are found at residues 23–81 and 96–156; these read STND…AWCS and KLEV…EEKC. Cystine bridges form between Cys-29–Cys-62, Cys-33–Cys-55, Cys-102–Cys-135, Cys-106–Cys-128, and Cys-114–Cys-156.

This is Enhancer of split M1 protein from Drosophila simulans (Fruit fly).